Reading from the N-terminus, the 900-residue chain is Translation initiation factor IF-2 (900 aa).

Disordered stretches follow at residues 30–77 (GEFV…SLDK) and 89–291 (NGKA…YDSM). Residues 89-112 (NGKATAAPAKAADSGGAAIVSPTT) show a composition bias toward low complexity. Pro residues predominate over residues 113–129 (PAAPEPPTAVPPSPQAP). Positions 175-187 (PGTARPGVPRPGA) are enriched in low complexity. Gly residues predominate over residues 215–271 (GRPGAPGAGRSDAGGGNYRGGGVGAAPGTGFRGRPGGGGGGRPGQRGGAAGAFGRPG). The span at 275–284 (RRGRKSKRQK) shows a compositional bias: basic residues. The tr-type G domain maps to 396–567 (VRPPVVTVMG…AVLLTADAAL (172 aa)). The interval 405–412 (GHVDHGKT) is G1. Residue 405-412 (GHVDHGKT) participates in GTP binding. Residues 430-434 (GITQH) form a G2 region. The tract at residues 455 to 458 (DTPG) is G3. GTP is bound by residues 455-459 (DTPGH) and 509-512 (NKID). The segment at 509–512 (NKID) is G4. Residues 545–547 (SAK) are G5.

The protein belongs to the TRAFAC class translation factor GTPase superfamily. Classic translation factor GTPase family. IF-2 subfamily.

Its subcellular location is the cytoplasm. Its function is as follows. One of the essential components for the initiation of protein synthesis. Protects formylmethionyl-tRNA from spontaneous hydrolysis and promotes its binding to the 30S ribosomal subunits. Also involved in the hydrolysis of GTP during the formation of the 70S ribosomal complex. The sequence is that of Translation initiation factor IF-2 from Mycobacterium bovis (strain BCG / Pasteur 1173P2).